Here is a 256-residue protein sequence, read N- to C-terminus: MSEKRVEKKLIHYVKKALNDYRMINTGDRVMVCLSGGKDSYTLLSLLNSIRIEGNYKFDIFAFVLDQSQPGWDDSALRGWLDDKKIPYEILTRDTYSIVKEKIPAGKTYCSLCSRLRRGIIYRYAEEQGFSKIALGHHRDDLIQTLLMSVFYNGQIRSMPPKLLSDNRRHVLIRPLAYCQERDIIKYAMEQQFPLIPCNLCGSQKNLMRQRVKRLISDLAKENPKVPSNMLRALSNIKPSQLMDHELWNFRELNVD.

The PP-loop motif motif lies at 35-40; the sequence is SGGKDS. 3 residues coordinate [4Fe-4S] cluster: Cys110, Cys113, and Cys201.

This sequence belongs to the TtcA family. In terms of assembly, homodimer. Requires Mg(2+) as cofactor. [4Fe-4S] cluster serves as cofactor.

The protein localises to the cytoplasm. It catalyses the reaction cytidine(32) in tRNA + S-sulfanyl-L-cysteinyl-[cysteine desulfurase] + AH2 + ATP = 2-thiocytidine(32) in tRNA + L-cysteinyl-[cysteine desulfurase] + A + AMP + diphosphate + H(+). It participates in tRNA modification. Its function is as follows. Catalyzes the ATP-dependent 2-thiolation of cytidine in position 32 of tRNA, to form 2-thiocytidine (s(2)C32). The sulfur atoms are provided by the cysteine/cysteine desulfurase (IscS) system. The polypeptide is tRNA-cytidine(32) 2-sulfurtransferase (Coxiella burnetii (strain RSA 331 / Henzerling II)).